The following is a 41-amino-acid chain: MDWRVLVVLLPVLLAAGWAVRNILPYAVKQVQKLLQKAKAA.

Residue methionine 1 is modified to N-formylmethionine. The Lumenal segment spans residues 1-4 (MDWR). Residues 5–23 (VLVVLLPVLLAAGWAVRNI) traverse the membrane as a helical segment. Topologically, residues 24 to 41 (LPYAVKQVQKLLQKAKAA) are cytoplasmic.

Belongs to the PsbY family. As to quaternary structure, PSII is composed of 1 copy each of membrane proteins PsbA, PsbB, PsbC, PsbD, PsbE, PsbF, PsbH, PsbI, PsbJ, PsbK, PsbL, PsbM, PsbT, PsbX, PsbY, PsbZ, Psb30/Ycf12, peripheral proteins PsbO, CyanoQ (PsbQ), PsbU, PsbV and a large number of cofactors. It forms dimeric complexes. This protein is only loosely associated with PSII, and is not often found in crystals. Found on the exterior of the PSII dimer, near cytochrome b559 (psbE and psbF). PSII binds multiple chlorophylls, carotenoids and specific lipids. is required as a cofactor.

It localises to the cellular thylakoid membrane. Loosely associated component of the core of photosystem II, it is not always seen in crystals. PSII is a light-driven water plastoquinone oxidoreductase, using light energy to abstract electrons from H(2)O, generating a proton gradient subsequently used for ATP formation. This Thermosynechococcus vestitus (strain NIES-2133 / IAM M-273 / BP-1) protein is Photosystem II reaction center protein Y.